The following is a 172-amino-acid chain: MKLPNILLTGTPGVGKTTLGKELASRSGLKYVNVGDLAREGHLYDGYDEEYGCPILDEDRVVDELEPQMTEGGVIVDYHGCDFFPERWFHIVFVLRTDNGILYKRLETRGYHEKKLQDNIQCEIFQVLYEEAMASYKEEIVHQLPSNEPEQLEDNINQISKWIEQWVKDHNP.

ATP is bound by residues Gly13, Gly15, Lys16, Thr17, and Thr18. The segment at 33-56 (NVGDLAREGHLYDGYDEEYGCPIL) is NMPbind. The tract at residues 108–118 (TRGYHEKKLQD) is LID. Arg109 contacts ATP.

It belongs to the adenylate kinase family. AK6 subfamily. Monomer and homodimer. Interacts with small ribosomal subunit protein uS11. Not a structural component of 43S pre-ribosomes, but transiently interacts with them by binding to uS11. Interacts with COIL (via C-terminus).

It localises to the cytoplasm. The protein resides in the nucleus. The protein localises to the nucleoplasm. It is found in the cajal body. The catalysed reaction is AMP + ATP = 2 ADP. It catalyses the reaction ATP + H2O = ADP + phosphate + H(+). In terms of biological role, broad-specificity nucleoside monophosphate (NMP) kinase that catalyzes the reversible transfer of the terminal phosphate group between nucleoside triphosphates and monophosphates. Also has ATPase activity. Involved in the late cytoplasmic maturation steps of the 40S ribosomal particles, specifically 18S rRNA maturation. While NMP activity is not required for ribosome maturation, ATPase activity is. Associates transiently with small ribosomal subunit protein uS11. ATP hydrolysis breaks the interaction with uS11. May temporarily remove uS11 from the ribosome to enable a conformational change of the ribosomal RNA that is needed for the final maturation step of the small ribosomal subunit. Its NMP activity may have a role in nuclear energy homeostasis. May be involved in regulation of Cajal body (CB) formation. This is Adenylate kinase isoenzyme 6 from Rattus norvegicus (Rat).